An 82-amino-acid chain; its full sequence is Sec-independent protein translocase protein TatA (82 aa).

The helical transmembrane segment at 1 to 21 (MGIFDWKHWIVILIVVVLVFG) threads the bilayer. Residues 43 to 82 (VNTEEDDKKDQPAAQPAQPLNQPHTIDAQAQKVEEPARKD) form a disordered region.

The protein belongs to the TatA/E family. As to quaternary structure, the Tat system comprises two distinct complexes: a TatABC complex, containing multiple copies of TatA, TatB and TatC subunits, and a separate TatA complex, containing only TatA subunits. Substrates initially bind to the TatABC complex, which probably triggers association of the separate TatA complex to form the active translocon.

The protein localises to the cell inner membrane. Its function is as follows. Part of the twin-arginine translocation (Tat) system that transports large folded proteins containing a characteristic twin-arginine motif in their signal peptide across membranes. TatA could form the protein-conducting channel of the Tat system. This chain is Sec-independent protein translocase protein TatA, found in Pseudomonas aeruginosa (strain LESB58).